We begin with the raw amino-acid sequence, 237 residues long: Ribonuclease PH (237 aa).

Residues arginine 86 and 124-126 contribute to the phosphate site; that span reads GTR.

This sequence belongs to the RNase PH family. As to quaternary structure, homohexameric ring arranged as a trimer of dimers.

The enzyme catalyses tRNA(n+1) + phosphate = tRNA(n) + a ribonucleoside 5'-diphosphate. Its function is as follows. Phosphorolytic 3'-5' exoribonuclease that plays an important role in tRNA 3'-end maturation. Removes nucleotide residues following the 3'-CCA terminus of tRNAs; can also add nucleotides to the ends of RNA molecules by using nucleoside diphosphates as substrates, but this may not be physiologically important. Probably plays a role in initiation of 16S rRNA degradation (leading to ribosome degradation) during starvation. The polypeptide is Ribonuclease PH (Zymomonas mobilis subsp. mobilis (strain ATCC 31821 / ZM4 / CP4)).